Here is a 38-residue protein sequence, read N- to C-terminus: Large ribosomal subunit protein bL36 (38 aa).

This sequence belongs to the bacterial ribosomal protein bL36 family.

The polypeptide is Large ribosomal subunit protein bL36 (Prosthecochloris aestuarii (strain DSM 271 / SK 413)).